The chain runs to 823 residues: Protein FAM193B (823 aa).

Disordered regions lie at residues 1-78, 158-191, 209-281, and 381-409; these read MTRR…TSQS, SCKSQSCGGDSHSSSSSSSSSSSSSSSCHGNSGD, SPHS…PTTP, and CEADEGLGEEEDSSSERSSCTSSSTHQRD. Over residues 26-36 the composition is skewed to pro residues; it reads PQAPEPPPPPS. Positions 52-64 are enriched in basic and acidic residues; that stretch reads PYRDDPREEDEPK. 2 stretches are compositionally biased toward low complexity: residues 168–184 and 263–281; these read SHSSSSSSSSSSSSSSS and SHPGSFGSPPHPHLLPTTP. Residues 382–393 show a composition bias toward acidic residues; sequence EADEGLGEEEDS. A coiled-coil region spans residues 422 to 484; it reads GHNAEKEKAQ…RLQEIKNTVK (63 aa). Disordered stretches follow at residues 503 to 583 and 599 to 775; these read FSKE…PENG and WVKT…PKDM. 2 stretches are compositionally biased toward polar residues: residues 516-526 and 641-657; these read LAPSNPSGSSE and QGNQAKKSEVSPASQSP. Ser694, Ser706, and Ser813 each carry phosphoserine.

It belongs to the FAM193 family.

Its subcellular location is the cytoplasm. It is found in the nucleus. This chain is Protein FAM193B (FAM193B), found in Bos taurus (Bovine).